The sequence spans 297 residues: tRNA (guanine-N(7)-)-methyltransferase (297 aa).

Residues glutamate 22, glutamate 47, aspartate 74, and aspartate 97 each coordinate S-adenosyl-L-methionine. Aspartate 97 is a catalytic residue. Residues lysine 101, aspartate 133, and threonine 165 to glutamate 168 contribute to the substrate site.

This sequence belongs to the class I-like SAM-binding methyltransferase superfamily. TrmB family.

It catalyses the reaction guanosine(46) in tRNA + S-adenosyl-L-methionine = N(7)-methylguanosine(46) in tRNA + S-adenosyl-L-homocysteine. Its pathway is tRNA modification; N(7)-methylguanine-tRNA biosynthesis. Catalyzes the formation of N(7)-methylguanine at position 46 (m7G46) in tRNA. The sequence is that of tRNA (guanine-N(7)-)-methyltransferase from Aquifex aeolicus (strain VF5).